Consider the following 511-residue polypeptide: Maturase K (511 aa).

The protein belongs to the intron maturase 2 family. MatK subfamily.

It is found in the plastid. The protein resides in the chloroplast. Functionally, usually encoded in the trnK tRNA gene intron. Probably assists in splicing its own and other chloroplast group II introns. This Hordeum murinum subsp. leporinum (Mouse barley) protein is Maturase K.